A 341-amino-acid chain; its full sequence is tRNA uridine(34) hydroxylase (341 aa).

Residues 139-233 (SDPEVVLVDT…YLEEVPSTET (95 aa)) form the Rhodanese domain. Cysteine 193 (cysteine persulfide intermediate) is an active-site residue. Composition is skewed to basic and acidic residues over residues 306 to 316 (SLAEERGESHI) and 324 to 341 (IEER…QANK). The tract at residues 306–341 (SLAEERGESHIGGDIQNIIEERRQEKNDKKAKQANK) is disordered.

The protein belongs to the TrhO family.

It carries out the reaction uridine(34) in tRNA + AH2 + O2 = 5-hydroxyuridine(34) in tRNA + A + H2O. Functionally, catalyzes oxygen-dependent 5-hydroxyuridine (ho5U) modification at position 34 in tRNAs. This is tRNA uridine(34) hydroxylase from Colwellia psychrerythraea (strain 34H / ATCC BAA-681) (Vibrio psychroerythus).